We begin with the raw amino-acid sequence, 198 residues long: Nudix hydrolase 21, chloroplastic (198 aa).

A chloroplast-targeting transit peptide spans 1 to 37; the sequence is MISLFISNFSNLSNLSPTFDNMNMNIPSKKIVPVPTP. Residues 59–191 form the Nudix hydrolase domain; that stretch reads GYRQVVGCVP…WMREALEAFI (133 aa). Positions 98 to 119 match the Nudix box motif; the sequence is GGWEIDESIEEAALRETIEEAG. Mg(2+) is bound by residues glutamate 113 and glutamate 117.

This sequence belongs to the Nudix hydrolase family. Mg(2+) serves as cofactor. It depends on Mn(2+) as a cofactor. Expressed in roots, leaves, stems and inflorescences.

The protein resides in the plastid. The protein localises to the chloroplast. Probably mediates the hydrolysis of some nucleoside diphosphate derivatives. The chain is Nudix hydrolase 21, chloroplastic (NUDT21) from Arabidopsis thaliana (Mouse-ear cress).